The following is a 421-amino-acid chain: Fusaric acid cluster transcription factor FUB10 (421 aa).

The segment at residues 16-47 (CDRCRAQKLRCHRDSGHSTDACLRCLKSGIEC) is a DNA-binding region (zn(2)-C6 fungal-type). Positions 50–92 (SKARPTGRPPSRQVQPTVVVEQGDTSSSSHTTDSSPSAGGTDM) are disordered. The segment covering 74 to 86 (TSSSSHTTDSSPS) has biased composition (low complexity).

Its subcellular location is the nucleus. In terms of biological role, transcription factor that regulates the expression of the gene cluster that mediates the biosynthesis of fusaric acid, a mycotoxin with low to moderate toxicity to animals and humans, but with high phytotoxic properties. This chain is Fusaric acid cluster transcription factor FUB10, found in Gibberella moniliformis (strain M3125 / FGSC 7600) (Maize ear and stalk rot fungus).